A 460-amino-acid chain; its full sequence is MLO-like protein 9 (460 aa).

The Extracellular segment spans residues 1–21 (MAGGGGGGGGEGPRQLDQTPT). The chain crosses the membrane as a helical span at residues 22–42 (WAVSTVCGVIILISIILELII). Residues 43–67 (HKVGEVFERKKKKALFEALEKIKNE) lie on the Cytoplasmic side of the membrane. The helical transmembrane segment at 68-88 (LMVLGFISLLLTFGQNYIASI) threads the bilayer. Topologically, residues 89–158 (CVPSRYGHAM…ISLNALHQVH (70 aa)) are extracellular. The helical transmembrane segment at 159 to 179 (IFIFFLAVFHVIYSAITMMLG) threads the bilayer. Topologically, residues 180–289 (RAKIRGWKVW…KVVVGIRPEL (110 aa)) are cytoplasmic. The helical transmembrane segment at 290–310 (WAFVMLFLLFDVHGWYVTAVI) threads the bilayer. Topologically, residues 311-315 (TMIPP) are extracellular. Residues 316 to 336 (LLTLAIGTKLQAIISYMALEI) form a helical membrane-spanning segment. The Cytoplasmic portion of the chain corresponds to 337–366 (QERHAVIQGMPVVNVSDQHFWFEKPDLVLH). The chain crosses the membrane as a helical span at residues 367–387 (MIHFVLFQNAFEITYFFWIWY). Over 388–398 (EFGLRSCFHHH) the chain is Extracellular. A helical membrane pass occupies residues 399–419 (FGLIIIRVCLGVGVQFLCSYI). Residues 420-460 (TLPLYALVTQMGSTMKRSVFDEQTSKALEQWHKKARKKNEK) lie on the Cytoplasmic side of the membrane. The interval 441–460 (EQTSKALEQWHKKARKKNEK) is calmodulin-binding.

It belongs to the MLO family.

The protein resides in the membrane. Functionally, may be involved in modulation of pathogen defense and leaf cell death. Activity seems to be regulated by Ca(2+)-dependent calmodulin binding and seems not to require heterotrimeric G proteins. The chain is MLO-like protein 9 (MLO9) from Arabidopsis thaliana (Mouse-ear cress).